Consider the following 347-residue polypeptide: Nuclear distribution protein nudE-like 1 (347 aa).

Residues 28-190 (QSFQEARDEL…LAVRERQQEV (163 aa)) adopt a coiled-coil conformation. The self-association stretch occupies residues 56–166 (VQAEQRNRDL…LDEKESLLVS (111 aa)). The interval 64-189 (DLQADNQRLK…ELAVRERQQE (126 aa)) is interaction with KATNB1. The interval 114 to 133 (YVRELEQANDDLERAKRATI) is required for interaction with PAFAH1B1. Positions 175–347 (RDLRQELAVR…SAPGMLPLSV (173 aa)) are interaction with CENPF. The interval 189-256 (EVTRKSAPSS…SARISALNIV (68 aa)) is interaction with YWHAE. Positions 191–347 (TRKSAPSSPT…SAPGMLPLSV (157 aa)) are interaction with NEFL. Residues 195–256 (APSSPTLDCE…SARISALNIV (62 aa)) form an interaction with KATNA1 region. The residue at position 215 (Ser215) is a Phosphoserine. Residue Thr219 is modified to Phosphothreonine; by CDK1 and MAPK1. Ser231 carries the phosphoserine modification. An interaction with DISC1 region spans residues 241-280 (TSPLTPSARISALNIVGDLLRKVGALESKLAACRNFAKDQ). Phosphoserine; by CDK1 is present on Ser242. Thr245 is subject to Phosphothreonine; by CDK1 and MAPK1. Residues 256-291 (VGDLLRKVGALESKLAACRNFAKDQASRKSYISGNV) form a required for localization to the centrosome and interaction with dynein, dynactin, tubulin gamma, PCM1 and PCNT region. Residue Cys273 is the site of S-palmitoyl cysteine; by ZDHHC2, ZDHHC3 and ZDHHC7 attachment. A disordered region spans residues 314-347 (KGAVNGFDPAPPPPDPGLGSSRPSSAPGMLPLSV). Phosphoserine is present on Ser346.

The protein belongs to the nudE family. In terms of assembly, self-associates. Interacts with DISC1, dynein, dynactin, tubulin gamma, KATNA1, KATNB1, microtubules, PAFAH1B1, PCM1, PCNT, and YWHAE. Interacts directly with NEFL and indirectly with NEFH. Interacts (via C-terminus) with CENPF. Interacts with ZNF365. Interacts with PLEKHM1 (via N- and C-terminus). Interacts with GTP-bound RAB9A; the interaction may lead to RAB9A-dynein motor tethering. Post-translationally, phosphorylated in mitosis. Can be phosphorylated by CDK1, CDK5 and MAPK1. Phosphorylation by CDK5 promotes interaction with KATNA1 and YWHAE. In terms of processing, palmitoylation at Cys-273 reduces affinity for dynein.

It localises to the cytoplasm. The protein resides in the cytoskeleton. Its subcellular location is the microtubule organizing center. The protein localises to the centrosome. It is found in the chromosome. It localises to the centromere. The protein resides in the kinetochore. Its subcellular location is the spindle. Required for organization of the cellular microtubule array and microtubule anchoring at the centrosome. May regulate microtubule organization at least in part by targeting the microtubule severing protein KATNA1 to the centrosome. Also positively regulates the activity of the minus-end directed microtubule motor protein dynein. May enhance dynein-mediated microtubule sliding by targeting dynein to the microtubule plus ends. Required for several dynein- and microtubule-dependent processes such as the maintenance of Golgi integrity, the centripetal motion of secretory vesicles and the coupling of the nucleus and centrosome. Also required during brain development for the migration of newly formed neurons from the ventricular/subventricular zone toward the cortical plate. Required for mitosis in some cell types but appears to be dispensible for mitosis in cortical neuronal progenitors, which instead requires NDE1. Facilitates the polymerization of neurofilaments from the individual subunits NEFH and NEFL. Positively regulates lysosome peripheral distribution and ruffled border formation in osteoclasts. Plays a role, together with DISC1, in the regulation of neurite outgrowth. May act as a RAB9A/B effector that tethers RAB9-associated late endosomes to the dynein motor for their retrograde transport to the trans-Golgi network. The protein is Nuclear distribution protein nudE-like 1 (NDEL1) of Macaca fascicularis (Crab-eating macaque).